Reading from the N-terminus, the 535-residue chain is MTKFIFVTGGVVSSLGKGITAASLGRLLKDRGLKVTIQKFDPYLNVDPGTMSPYQHGEVFVTDDGAETDLDLGHYERFIDINLNKYSNVTAGKVYSHVLKKERRGDYLGGTVQVIPHITNEIKERLLLAGESTNADVVITEIGGTTGDIESLPFIEAIRQIRSDLGRENVMYVHCTLLPYIKAAGEMKTKPTQHSVKELRGLGIQPDLIVVRTEYEMTQDLKDKIALFCDINKESVIECRDASSLYEIPLQLSAQDMDDIVIKRLDLDAKYETQLDEWQYLLDTVNSLDGTITIGLVGKYVSLQDAYLSVVESLKHAGYPLKKDVVVKWIDSGEVNDNNVEDYLKDVDGILVPGGFGFRASEGKIAAIKYARENNVPYFGICLGMQLATVEFARNVLGLEGAHSAELNPSTPYPIIDLLPEQKDIEDLGGTLRLGLYPCKIKENTLAHQIYDAVNIEERHRHRYEFNNEFREQLEANGMVFSGTSPDGRLVEMVEIPENDFYIACQFHPEFLSRPNRPQPIFKSFVEAAYKHQNK.

Positions 1–267 are amidoligase domain; it reads MTKFIFVTGG…DDIVIKRLDL (267 aa). Position 13 (S13) interacts with CTP. Residue S13 coordinates UTP. Position 14 to 19 (14 to 19) interacts with ATP; sequence SLGKGI. L-glutamine is bound at residue Y54. D71 is a binding site for ATP. 2 residues coordinate Mg(2+): D71 and E141. CTP-binding positions include 148–150, 188–193, and K224; these read DIE and KTKPTQ. UTP contacts are provided by residues 188–193 and K224; that span reads KTKPTQ. 240–242 contacts ATP; it reads RDA. The 243-residue stretch at 293-535 folds into the Glutamine amidotransferase type-1 domain; sequence TIGLVGKYVS…VEAAYKHQNK (243 aa). Position 355 (G355) interacts with L-glutamine. Catalysis depends on C382, which acts as the Nucleophile; for glutamine hydrolysis. L-glutamine contacts are provided by residues 383–386, E406, and R463; that span reads LGMQ. Residues H508 and E510 contribute to the active site.

This sequence belongs to the CTP synthase family. In terms of assembly, homotetramer.

The catalysed reaction is UTP + L-glutamine + ATP + H2O = CTP + L-glutamate + ADP + phosphate + 2 H(+). It carries out the reaction L-glutamine + H2O = L-glutamate + NH4(+). It catalyses the reaction UTP + NH4(+) + ATP = CTP + ADP + phosphate + 2 H(+). It participates in pyrimidine metabolism; CTP biosynthesis via de novo pathway; CTP from UDP: step 2/2. Allosterically activated by GTP, when glutamine is the substrate; GTP has no effect on the reaction when ammonia is the substrate. The allosteric effector GTP functions by stabilizing the protein conformation that binds the tetrahedral intermediate(s) formed during glutamine hydrolysis. Inhibited by the product CTP, via allosteric rather than competitive inhibition. In terms of biological role, catalyzes the ATP-dependent amination of UTP to CTP with either L-glutamine or ammonia as the source of nitrogen. Regulates intracellular CTP levels through interactions with the four ribonucleotide triphosphates. The chain is CTP synthase from Staphylococcus haemolyticus (strain JCSC1435).